The primary structure comprises 351 residues: uncharacterized protein (351 aa).

This is an uncharacterized protein from Caenorhabditis elegans.